Here is a 180-residue protein sequence, read N- to C-terminus: NAD(P)H-quinone oxidoreductase subunit I, chloroplastic (180 aa).

4Fe-4S ferredoxin-type domains are found at residues 55-84 and 95-124; these read GRIHFEFDKCIACEVCVRVCPIDLPVVDWK and LNYSIDFGICIFCGNCVEYCPTNCLSMTEE. Residues Cys64, Cys67, Cys70, Cys74, Cys104, Cys107, Cys110, and Cys114 each coordinate [4Fe-4S] cluster.

It belongs to the complex I 23 kDa subunit family. In terms of assembly, NDH is composed of at least 16 different subunits, 5 of which are encoded in the nucleus. [4Fe-4S] cluster serves as cofactor.

Its subcellular location is the plastid. It is found in the chloroplast thylakoid membrane. It catalyses the reaction a plastoquinone + NADH + (n+1) H(+)(in) = a plastoquinol + NAD(+) + n H(+)(out). The catalysed reaction is a plastoquinone + NADPH + (n+1) H(+)(in) = a plastoquinol + NADP(+) + n H(+)(out). NDH shuttles electrons from NAD(P)H:plastoquinone, via FMN and iron-sulfur (Fe-S) centers, to quinones in the photosynthetic chain and possibly in a chloroplast respiratory chain. The immediate electron acceptor for the enzyme in this species is believed to be plastoquinone. Couples the redox reaction to proton translocation, and thus conserves the redox energy in a proton gradient. The polypeptide is NAD(P)H-quinone oxidoreductase subunit I, chloroplastic (Nandina domestica (Heavenly bamboo)).